A 578-amino-acid chain; its full sequence is Arginine--tRNA ligase (578 aa).

A 'HIGH' region motif is present at residues 127–137 (PNLAKEMHVGH).

This sequence belongs to the class-I aminoacyl-tRNA synthetase family. As to quaternary structure, monomer.

The protein localises to the cytoplasm. It carries out the reaction tRNA(Arg) + L-arginine + ATP = L-arginyl-tRNA(Arg) + AMP + diphosphate. This chain is Arginine--tRNA ligase, found in Pseudomonas putida (strain ATCC 47054 / DSM 6125 / CFBP 8728 / NCIMB 11950 / KT2440).